The primary structure comprises 349 residues: Cyclic amide hydrolase (349 aa).

Residues Met1–Ser90 form an RU A region. Residue Arg38 coordinates substrate. The tract at residues Gly99–Pro231 is RU B. Lys149 is an active-site residue. Residues Arg176, Ser214–Ala215, Lys311, and Ser330–Gly331 each bind substrate. Residue Ser214 is the Nucleophile of the active site. The tract at residues Tyr237–Arg349 is RU C.

The protein belongs to the cyclic amide hydrolase (CyAH) family. As to quaternary structure, homotetramer.

Its function is as follows. Cyclic amide hydrolase of unknown substrate specificity. Catalyzes the hydrolytic ring-opening of a cyclic amide. Does not act on cyanuric acid nor barbituric acid. This Rhodococcus sp protein is Cyclic amide hydrolase.